A 1183-amino-acid polypeptide reads, in one-letter code: DNA-directed RNA polymerase subunit beta (1183 aa).

Positions 1151–1162 (EIEMADVDDEDA) are enriched in acidic residues. Residues 1151-1183 (EIEMADVDDEDAAERKVDLQQKSAPESQKETTD) are disordered.

The protein belongs to the RNA polymerase beta chain family. As to quaternary structure, the RNAP catalytic core consists of 2 alpha, 1 beta, 1 beta' and 1 omega subunit. When a sigma factor is associated with the core the holoenzyme is formed, which can initiate transcription.

It catalyses the reaction RNA(n) + a ribonucleoside 5'-triphosphate = RNA(n+1) + diphosphate. In terms of biological role, DNA-dependent RNA polymerase catalyzes the transcription of DNA into RNA using the four ribonucleoside triphosphates as substrates. The chain is DNA-directed RNA polymerase subunit beta from Staphylococcus epidermidis (strain ATCC 12228 / FDA PCI 1200).